We begin with the raw amino-acid sequence, 442 residues long: MLSDTICAIASGQINQAISIIRISGPNAFKIMEKIFLGKVGKSMEITFGWIHDDNQKIDQVLVLWFAGNKNFVGEDTVEINAHGGVLNTNLILELILKTKLARLANPGEFSLRAFLNGKIDLVKAQAINDLIHAEVKVQHQAALNQFLGKSSNFIKNLIEKIEEIIGIIEVNIDYPEYDDVEILTSDVLLPKINQLLADFDQLIKIANNSRLIYQGIKTCLVGAPNSGKSSLLNILINENKAIISEIPGTTRDVVEGNFVLDGLLFKLFDTAGIRKTTEKIEQIGIEKSYESIKKADLILHIIDASEKNRQNLDLKAKARPDQVYLKIYNKSDLLENQEEFKDEILISAKYQKIENLLEKIKSIFAFLGKNKEFVANSFQISQIELGKLAILDAKTSLESGFGPEIAIVDLRIAWKELKTIFGRVDDENLLDSIFSKFCLGK.

Arg22, Glu79, and Lys119 together coordinate (6S)-5-formyl-5,6,7,8-tetrahydrofolate. The TrmE-type G domain maps to 216–366; the sequence is GIKTCLVGAP…LLEKIKSIFA (151 aa). Asn226 is a K(+) binding site. GTP is bound by residues 226-231, 245-251, and 270-273; these read NSGKSS, SEIPGTT, and DTAG. Position 230 (Ser230) interacts with Mg(2+). Ser245, Ile247, and Thr250 together coordinate K(+). Mg(2+) is bound at residue Thr251. Lys442 is a (6S)-5-formyl-5,6,7,8-tetrahydrofolate binding site.

The protein belongs to the TRAFAC class TrmE-Era-EngA-EngB-Septin-like GTPase superfamily. TrmE GTPase family. Homodimer. Heterotetramer of two MnmE and two MnmG subunits. K(+) serves as cofactor.

It localises to the cytoplasm. Exhibits a very high intrinsic GTPase hydrolysis rate. Involved in the addition of a carboxymethylaminomethyl (cmnm) group at the wobble position (U34) of certain tRNAs, forming tRNA-cmnm(5)s(2)U34. The polypeptide is tRNA modification GTPase MnmE (Mesomycoplasma hyopneumoniae (strain 7448) (Mycoplasma hyopneumoniae)).